Consider the following 189-residue polypeptide: Ribonuclease HII (189 aa).

Residues 1 to 189 (MIAGVDEAGR…PVRRALNIDC (189 aa)) form the RNase H type-2 domain. 3 residues coordinate a divalent metal cation: aspartate 6, glutamate 7, and aspartate 98.

Belongs to the RNase HII family. It depends on Mn(2+) as a cofactor. Mg(2+) serves as cofactor.

It localises to the cytoplasm. The catalysed reaction is Endonucleolytic cleavage to 5'-phosphomonoester.. Functionally, endonuclease that specifically degrades the RNA of RNA-DNA hybrids. The protein is Ribonuclease HII of Acinetobacter baylyi (strain ATCC 33305 / BD413 / ADP1).